Here is a 153-residue protein sequence, read N- to C-terminus: Cell division protein SepF (153 aa).

Belongs to the SepF family. As to quaternary structure, homodimer. Interacts with FtsZ.

It localises to the cytoplasm. Its function is as follows. Cell division protein that is part of the divisome complex and is recruited early to the Z-ring. Probably stimulates Z-ring formation, perhaps through the cross-linking of FtsZ protofilaments. Its function overlaps with FtsA. This chain is Cell division protein SepF, found in Clostridium novyi (strain NT).